Here is a 155-residue protein sequence, read N- to C-terminus: RNA pyrophosphohydrolase (155 aa).

The Nudix hydrolase domain maps to 5-147 (KYRPNVAAII…KRQVYRQVIA (143 aa)). The Nudix box motif lies at 42–63 (GGIDEGETPLEALHRELLEEIG).

Belongs to the Nudix hydrolase family. RppH subfamily. It depends on a divalent metal cation as a cofactor.

Accelerates the degradation of transcripts by removing pyrophosphate from the 5'-end of triphosphorylated RNA, leading to a more labile monophosphorylated state that can stimulate subsequent ribonuclease cleavage. This Helicobacter pylori (strain HPAG1) protein is RNA pyrophosphohydrolase.